A 380-amino-acid polypeptide reads, in one-letter code: N-acetylneuraminate epimerase (380 aa).

A signal peptide spans 1-21; the sequence is MKFTKTALFTVLAATAFAAQA. 7 Kelch repeats span residues 42–86, 88–140, 142–176, 177–222, 225–274, 296–349, and 351–380; these read TVYV…AGVN, KLYV…AADG, KIYF…AIFD, PYFN…AIKD, LLVV…IAGG, ANYE…SYNN, and VLLI…LTVE. The active-site Proton acceptor is the Glu-231.

It belongs to the NanM family. As to quaternary structure, homodimer.

It localises to the periplasm. The catalysed reaction is N-acetyl-alpha-neuraminate = N-acetyl-beta-neuraminate. Converts alpha-N-acetylneuranimic acid (Neu5Ac) to the beta-anomer, accelerating the equilibrium between the alpha- and beta-anomers. Probably facilitates sialidase-negative bacteria to compete successfully for limited amounts of extracellular Neu5Ac, which is likely taken up in the beta-anomer. In addition, the rapid removal of sialic acid from solution might be advantageous to the bacterium to damp down host responses. The protein is N-acetylneuraminate epimerase of Pasteurella multocida (strain Pm70).